A 237-amino-acid chain; its full sequence is Phosphoribosylaminoimidazole-succinocarboxamide synthase (237 aa).

This sequence belongs to the SAICAR synthetase family.

The enzyme catalyses 5-amino-1-(5-phospho-D-ribosyl)imidazole-4-carboxylate + L-aspartate + ATP = (2S)-2-[5-amino-1-(5-phospho-beta-D-ribosyl)imidazole-4-carboxamido]succinate + ADP + phosphate + 2 H(+). It participates in purine metabolism; IMP biosynthesis via de novo pathway; 5-amino-1-(5-phospho-D-ribosyl)imidazole-4-carboxamide from 5-amino-1-(5-phospho-D-ribosyl)imidazole-4-carboxylate: step 1/2. This Hamiltonella defensa subsp. Acyrthosiphon pisum (strain 5AT) protein is Phosphoribosylaminoimidazole-succinocarboxamide synthase.